Reading from the N-terminus, the 1195-residue chain is ATP-dependent DNA helicase Hel308 (1195 aa).

ATP is bound by residues glutamine 20 and 39-46; that span reads IPTASGKT. A Helicase ATP-binding domain is found at 26 to 196; it reads RGLLDKNKNF…WLNAELIVDD (171 aa). The DEAH box signature appears at 143 to 146; that stretch reads DEIH. Residues 451 to 584 form the DOD-type homing endonuclease domain; the sequence is FIGYFIGDGY…LQFVLLRFGI (134 aa).

The protein belongs to the helicase family. Hel308 subfamily. In terms of assembly, monomer. In terms of processing, this protein undergoes a protein self splicing that involves a post-translational excision of the intervening region (intein) followed by peptide ligation.

The catalysed reaction is Couples ATP hydrolysis with the unwinding of duplex DNA by translocating in the 3'-5' direction.. The enzyme catalyses ATP + H2O = ADP + phosphate + H(+). Its function is as follows. DNA-dependent ATPase and 3'-5' DNA helicase that may be involved in repair of stalled replication forks. The protein is ATP-dependent DNA helicase Hel308 of Methanocaldococcus jannaschii (strain ATCC 43067 / DSM 2661 / JAL-1 / JCM 10045 / NBRC 100440) (Methanococcus jannaschii).